The primary structure comprises 583 residues: Chromosomal replication initiator protein DnaA (583 aa).

A domain I, interacts with DnaA modulators region spans residues 1–91 (MNAENLDPAT…SPMFPAFKVM (91 aa)). Disordered regions lie at residues 86–179 (PAFK…QQPV) and 197–232 (VAGF…NYRD). Positions 91–235 (MPPAQPEPQT…VTGNYRDPVT (145 aa)) are domain II. The segment covering 97-106 (EPQTTASPED) has biased composition (polar residues). Composition is skewed to basic and acidic residues over residues 126 to 135 (EDSRTPRHSA) and 147 to 174 (QERE…EHEP). Over residues 205–226 (AGTTAPQYPPQSEMQGSFTPGV) the composition is skewed to polar residues. A domain III, AAA+ region region spans residues 236–460 (HLNSNDTFDT…GALKRVIAMA (225 aa)). Residues glycine 280, glycine 282, lysine 283, and threonine 284 each coordinate ATP. Residues 461–583 (SLNHQPVTRA…TVELKQHLND (123 aa)) are domain IV, binds dsDNA.

This sequence belongs to the DnaA family. In terms of assembly, oligomerizes as a right-handed, spiral filament on DNA at oriC.

The protein resides in the cytoplasm. Plays an essential role in the initiation and regulation of chromosomal replication. ATP-DnaA binds to the origin of replication (oriC) to initiate formation of the DNA replication initiation complex once per cell cycle. Binds the DnaA box (a 9 base pair repeat at the origin) and separates the double-stranded (ds)DNA. Forms a right-handed helical filament on oriC DNA; dsDNA binds to the exterior of the filament while single-stranded (ss)DNA is stabiized in the filament's interior. The ATP-DnaA-oriC complex binds and stabilizes one strand of the AT-rich DNA unwinding element (DUE), permitting loading of DNA polymerase. After initiation quickly degrades to an ADP-DnaA complex that is not apt for DNA replication. Binds acidic phospholipids. The chain is Chromosomal replication initiator protein DnaA from Bifidobacterium animalis subsp. lactis (strain AD011).